Consider the following 60-residue polypeptide: Large ribosomal subunit protein bL32 (60 aa).

Residues 1 to 27 (MAVPRNRLSNARKNSKRAHHAKKPKSL) form a disordered region. The span at 13 to 25 (KNSKRAHHAKKPK) shows a compositional bias: basic residues.

The protein belongs to the bacterial ribosomal protein bL32 family.

This chain is Large ribosomal subunit protein bL32, found in Protochlamydia amoebophila (strain UWE25).